The chain runs to 876 residues: Leucine--tRNA ligase (876 aa).

The 'HIGH' region motif lies at 43–53; sequence PYPSGRIHMGH. The 'KMSKS' region signature appears at 632–636; that stretch reads KMSKS. Lys-635 provides a ligand contact to ATP.

This sequence belongs to the class-I aminoacyl-tRNA synthetase family.

The protein resides in the cytoplasm. The catalysed reaction is tRNA(Leu) + L-leucine + ATP = L-leucyl-tRNA(Leu) + AMP + diphosphate. The chain is Leucine--tRNA ligase from Sinorhizobium fredii (strain NBRC 101917 / NGR234).